Reading from the N-terminus, the 102-residue chain is Late embryogenesis abundant protein D-19 (102 aa).

Positions Met1 to Asn102 are disordered. Positions Glu48–Lys58 are enriched in basic and acidic residues.

It belongs to the small hydrophilic plant seed protein family.

In terms of biological role, LEA proteins are late embryonic proteins abundant in higher plant seed embryos. There are two subsets of LEA proteins (5a and 5b), the first ones are expressed when the cotyledon weight reach 80 mg and the second set are expressed above 100 mg. The function of those proteins is not known. This Gossypium hirsutum (Upland cotton) protein is Late embryogenesis abundant protein D-19.